We begin with the raw amino-acid sequence, 462 residues long: Glutamate decarboxylase alpha (462 aa).

Residue Lys273 is modified to N6-(pyridoxal phosphate)lysine.

It belongs to the group II decarboxylase family. It depends on pyridoxal 5'-phosphate as a cofactor.

The enzyme catalyses L-glutamate + H(+) = 4-aminobutanoate + CO2. Functionally, converts internalized glutamate to GABA and increases the internal pH. Involved in glutamate-dependent acid resistance in gastric fluid. The chain is Glutamate decarboxylase alpha (gadA) from Listeria monocytogenes serovar 1/2a (strain ATCC BAA-679 / EGD-e).